A 276-amino-acid polypeptide reads, in one-letter code: Apulose-4-phosphate transketolase subunit A (276 aa).

This sequence belongs to the transketolase family. In terms of assembly, probable heterodimer composed of AptA and AptB. Requires thiamine diphosphate as cofactor.

The catalysed reaction is apulose 4-phosphate + D-glyceraldehyde 3-phosphate = D-xylulose 5-phosphate + dihydroxyacetone phosphate. Its pathway is carbohydrate metabolism. Functionally, involved in catabolism of D-apiose. Catalyzes the transfer of the glycolaldehyde group from apulose-4-phosphate to D-glyceraldehyde 3-phosphate, generating dihydroxyacetone phosphate and D-xylulose-5-phosphate. The sequence is that of Apulose-4-phosphate transketolase subunit A from Actinobacillus succinogenes (strain ATCC 55618 / DSM 22257 / CCUG 43843 / 130Z).